Consider the following 380-residue polypeptide: Pregnancy-associated glycoprotein 6 (380 aa).

The signal sequence occupies residues 1 to 15; it reads MKWLVLLGLVSISEC. The propeptide at 16-53 is activation peptide; sequence IVKIPLRRVKTMRKTLSEKNMLNNFLKEHAYRLSQISF. Asn-57 and Asn-74 each carry an N-linked (GlcNAc...) asparagine glycan. The region spanning 71 to 377 is the Peptidase A1 domain; it reads YLGNITIGTP…DRGHDRIGLA (307 aa). Asp-89 is an active-site residue. Cys-102 and Cys-107 are disulfide-bonded. Asn-125 carries N-linked (GlcNAc...) asparagine glycosylation. The cysteines at positions 261 and 265 are disulfide-linked. The active site involves Asp-270. A disulfide bridge connects residues Cys-303 and Cys-337.

It belongs to the peptidase A1 family. Trophoblast and placental tissue. Produced specifically in the invasive binucleate cells of the placenta.

Its subcellular location is the secreted. The protein resides in the extracellular space. The protein is Pregnancy-associated glycoprotein 6 of Ovis aries (Sheep).